A 315-amino-acid chain; its full sequence is Endolytic peptidoglycan transglycosylase RlpA (315 aa).

Positions 1 to 19 (MGLALEKVCFLGVIFLISA) are cleaved as a signal peptide. A lipid anchor (N-palmitoyl cysteine) is attached at C20. C20 carries S-diacylglycerol cysteine lipidation. The span at 68-79 (SDSQDSNTKDQP) shows a compositional bias: basic and acidic residues. The tract at residues 68–92 (SDSQDSNTKDQPLDNGMRDSSSIQR) is disordered. Residues 242–315 (SVSGGKFSLQ…YNQNAVLTRE (74 aa)) form the SPOR domain.

It belongs to the RlpA family.

The protein localises to the cell membrane. Its function is as follows. Lytic transglycosylase with a strong preference for naked glycan strands that lack stem peptides. The chain is Endolytic peptidoglycan transglycosylase RlpA from Helicobacter pylori (strain ATCC 700392 / 26695) (Campylobacter pylori).